Consider the following 136-residue polypeptide: Histone H2B (136 aa).

The span at M1–P10 shows a compositional bias: basic and acidic residues. Positions M1–R44 are disordered. An N6-acetyllysine; alternate mark is found at K8 and K9. Residues K8 and K9 each participate in a glycyl lysine isopeptide (Lys-Gly) (interchain with G-Cter in SUMO); alternate cross-link. An N6-acetyllysine modification is found at K13. K23 carries the N6-acetyllysine; alternate modification. A Glycyl lysine isopeptide (Lys-Gly) (interchain with G-Cter in SUMO); alternate cross-link involves residue K23. A Glycyl lysine isopeptide (Lys-Gly) (interchain with G-Cter in SUMO) cross-link involves residue K24. K130 participates in a covalent cross-link: Glycyl lysine isopeptide (Lys-Gly) (interchain with G-Cter in ubiquitin).

It belongs to the histone H2B family. In terms of assembly, the nucleosome is a histone octamer containing two molecules each of H2A, H2B, H3 and H4 assembled in one H3-H4 heterotetramer and two H2A-H2B heterodimers. The octamer wraps approximately 147 bp of DNA. Monoubiquitinated to form H2BK123ub1. H2BK123ub1 gives a specific tag for epigenetic transcriptional activation and is also prerequisite for H3K4me and H3K79me formation. H2BK123ub1 also modulates the formation of double-strand breaks during meiosis and is a prerequisite for DNA-damage checkpoint activation. In terms of processing, acetylated by GCN5 to form H2BK11ac and H2BK16ac. H2BK16ac can also be formed by ESA1. Acetylation of N-terminal lysines and particularly formation of H2BK11acK16ac has a positive effect on transcription. Post-translationally, sumoylation to form H2BK6su or H2BK7su, and probably also H2BK16su or H2BK17su, occurs preferentially near the telomeres and represses gene transcription.

Its subcellular location is the nucleus. It is found in the chromosome. Functionally, core component of nucleosome. Nucleosomes wrap and compact DNA into chromatin, limiting DNA accessibility to the cellular machineries which require DNA as a template. Histones thereby play a central role in transcription regulation, DNA repair, DNA replication and chromosomal stability. DNA accessibility is regulated via a complex set of post-translational modifications of histones, also called histone code, and nucleosome remodeling. The protein is Histone H2B (hh2b) of Rosellinia necatrix (White root-rot fungus).